We begin with the raw amino-acid sequence, 417 residues long: Serine hydroxymethyltransferase (417 aa).

Residues L121 and G125–L127 each bind (6S)-5,6,7,8-tetrahydrofolate. K229 is modified (N6-(pyridoxal phosphate)lysine). S355 to F357 contacts (6S)-5,6,7,8-tetrahydrofolate.

This sequence belongs to the SHMT family. Homodimer. Pyridoxal 5'-phosphate serves as cofactor.

It is found in the cytoplasm. It carries out the reaction (6R)-5,10-methylene-5,6,7,8-tetrahydrofolate + glycine + H2O = (6S)-5,6,7,8-tetrahydrofolate + L-serine. Its pathway is one-carbon metabolism; tetrahydrofolate interconversion. The protein operates within amino-acid biosynthesis; glycine biosynthesis; glycine from L-serine: step 1/1. Catalyzes the reversible interconversion of serine and glycine with tetrahydrofolate (THF) serving as the one-carbon carrier. This reaction serves as the major source of one-carbon groups required for the biosynthesis of purines, thymidylate, methionine, and other important biomolecules. Also exhibits THF-independent aldolase activity toward beta-hydroxyamino acids, producing glycine and aldehydes, via a retro-aldol mechanism. The protein is Serine hydroxymethyltransferase of Buchnera aphidicola subsp. Schizaphis graminum (strain Sg).